Consider the following 291-residue polypeptide: Glycine--tRNA ligase alpha subunit (291 aa).

This sequence belongs to the class-II aminoacyl-tRNA synthetase family. In terms of assembly, tetramer of two alpha and two beta subunits.

Its subcellular location is the cytoplasm. The enzyme catalyses tRNA(Gly) + glycine + ATP = glycyl-tRNA(Gly) + AMP + diphosphate. The protein is Glycine--tRNA ligase alpha subunit of Rhizorhabdus wittichii (strain DSM 6014 / CCUG 31198 / JCM 15750 / NBRC 105917 / EY 4224 / RW1) (Sphingomonas wittichii).